Reading from the N-terminus, the 118-residue chain is Cell division protein FtsB (118 aa).

Residues 1 to 6 (MRNWRW) are Cytoplasmic-facing. A helical membrane pass occupies residues 7–24 (LLLVLAALLAWLQHRFWF). Residues 25–118 (GPGNSGEVRM…DLSQPRREKR (94 aa)) are Periplasmic-facing. Residues 30–66 (GEVRMLQVQIVQQHQENERLRQRNASLAAEVKNLKDG) are a coiled coil. Residues 98–118 (LPNDTSADHGVDLSQPRREKR) form a disordered region. Residues 103–118 (SADHGVDLSQPRREKR) are compositionally biased toward basic and acidic residues.

Belongs to the FtsB family. Part of a complex composed of FtsB, FtsL and FtsQ.

Its subcellular location is the cell inner membrane. Its function is as follows. Essential cell division protein. May link together the upstream cell division proteins, which are predominantly cytoplasmic, with the downstream cell division proteins, which are predominantly periplasmic. In Xylella fastidiosa (strain M12), this protein is Cell division protein FtsB.